A 659-amino-acid polypeptide reads, in one-letter code: Cyclic-di-AMP phosphodiesterase GdpP (659 aa).

The Cytoplasmic portion of the chain corresponds to 1 to 8; sequence MPSFYEKP. 2 helical membrane-spanning segments follow: residues 9 to 29 and 30 to 50; these read LFRYPIYALIALSIITILISF and YFNWILGTVEVLLLAVILFFI. Residues 51 to 659 lie on the Cytoplasmic side of the membrane; sequence KRADSLIRQE…DEYFEGGVQR (609 aa). Residues 84–149 are PAS-like domain, required for heme-binding; the sequence is PIGIMLFNDQ…NDRKFRVVIK (66 aa). The region spanning 173–301 is the GGDEF domain; that stretch reads ERTVLAYIFL…GGDQVAIKLP (129 aa). The tract at residues 339–496 is DHH domain; that stretch reads NVIIMGHKFP…IEATALLAGI (158 aa). Mn(2+) contacts are provided by His-345, Asp-349, Asp-351, Asp-420, His-444, and Asp-499. Residues 591 to 646 are DHHA1 domain; that stretch reads FAVARRDEQTVCISARSLGEVNVQIIMEALEGGGHLTNAATQLSGISVSEALERLK.

This sequence belongs to the GdpP/PdeA phosphodiesterase family. Heme b serves as cofactor. Mg(2+) is required as a cofactor. The cofactor is Mn(2+).

Its subcellular location is the cell membrane. The enzyme catalyses 3',3'-c-di-AMP + H2O = 5'-O-phosphonoadenylyl-(3'-&gt;5')-adenosine + H(+). Its activity is regulated as follows. Phosphodiesterase (PDE) inhibited by Zn(2+), Ca(2+) inhibits in the presence of Mg(2+) but not Mn(2+); c-di-AMP PDE activity is competitively inhibited by ppGpp. Heme binding (by Fe(2+) or Fe(3+) heme) inhibits PDE, activity is partially restored by KCN or NO only for Fe(2+) heme. Binding of NO to Fe(2+) heme switches from hexa- to pentacoordination. Heme binding inhibits the ATPase activity. Has phosphodiesterase (PDE) activity against cyclic-di-AMP (c-di-AMP) and to a much lesser extent against cyclic-di-GMP (c-di-GMP) in the DHH/DHHA1 domains. Also has ATPase activity, probably via the GGDEF domain. Overexpression leads to increased sensitivity to methyl methanesulfonate (MMS) and H(2)O(2). Overexpression leads to extreme sensitivity to the beta-lactam antibiotic cefuroxime (CEF), probably dependent on PDE activity. May monitor cellular heme or NO levels. In B.subtilis c-di-AMP is a second messenger that mediates growth, DNA repair and cell wall homeostasis; it is toxic when present in excess. The chain is Cyclic-di-AMP phosphodiesterase GdpP from Bacillus subtilis (strain 168).